We begin with the raw amino-acid sequence, 402 residues long: Zinc finger protein 322 (402 aa).

The C2H2-type 1; atypical zinc-finger motif lies at 43-65 (YQCLECKQNFCENLALIMCERTH). 8 consecutive C2H2-type zinc fingers follow at residues 71 to 93 (YKCDMCEKTFVQSSDLTSHQRIH), 99 to 121 (YKCSKCEKSFWHHLALSGHQRTH), 127 to 149 (YTCDICGKNFGQSSDLLVHQRSH), 155 to 177 (YLCSECDKCFSRSTNLIRHRRTH), 183 to 205 (FKCLECEKAFSGKSDLISHQRTH), 211 to 233 (YKCNKCEKSYRHRSAFIVHKRVH), 239 to 261 (YKCGACEKCFGQKSDLIVHQRVH), and 267 to 289 (YKCLECMRSFTRSANLIRHQATH). The C2H2-type 10; degenerate zinc finger occupies 293 to 315 (FKCLEYEKSFNCSSDLIVHQRIH). Residues 351–373 (YKYTVCDKSFHQSSALLQHQTVH) form a C2H2-type 11; degenerate zinc finger. Position 391 is a phosphoserine (Ser391).

The protein belongs to the krueppel C2H2-type zinc-finger protein family. In terms of assembly, interacts with POU5F1. As to expression, ubiquitous. Highly expressed in heart and skeletal muscle.

Its subcellular location is the cytoplasm. The protein resides in the nucleus. In terms of biological role, transcriptional activator. Important for maintenance of pluripotency in embryonic stem cells. Binds directly to the POU5F1 distal enhancer and the NANOG proximal promoter, and enhances expression of both genes. Can also bind to numerous other gene promoters and regulates expression of many other pluripotency factors, either directly or indirectly. Promotes inhibition of MAPK signaling during embryonic stem cell differentiation. This chain is Zinc finger protein 322 (ZNF322), found in Homo sapiens (Human).